Consider the following 241-residue polypeptide: Ribose-5-phosphate isomerase A (241 aa).

Substrate is bound by residues 29 to 32, 84 to 87, and 97 to 100; these read TGTT, DGAD, and KGGG. Residue glutamate 106 is the Proton acceptor of the active site. Lysine 124 contacts substrate.

This sequence belongs to the ribose 5-phosphate isomerase family. In terms of assembly, homodimer.

It catalyses the reaction aldehydo-D-ribose 5-phosphate = D-ribulose 5-phosphate. The protein operates within carbohydrate degradation; pentose phosphate pathway; D-ribose 5-phosphate from D-ribulose 5-phosphate (non-oxidative stage): step 1/1. In terms of biological role, catalyzes the reversible conversion of ribose-5-phosphate to ribulose 5-phosphate. In Thermoplasma acidophilum (strain ATCC 25905 / DSM 1728 / JCM 9062 / NBRC 15155 / AMRC-C165), this protein is Ribose-5-phosphate isomerase A.